We begin with the raw amino-acid sequence, 85 residues long: Probable weak neurotoxin 3FTx-Lio1 (85 aa).

The first 18 residues, 1 to 18 (MKAVILSLVAAFLYSGYT), serve as a signal peptide directing secretion. 5 disulfide bridges follow: cysteine 21–cysteine 42, cysteine 24–cysteine 29, cysteine 35–cysteine 60, cysteine 64–cysteine 75, and cysteine 76–cysteine 81.

It belongs to the three-finger toxin family. Ancestral subfamily. In terms of tissue distribution, expressed by the venom gland.

Its subcellular location is the secreted. The polypeptide is Probable weak neurotoxin 3FTx-Lio1 (Erythrolamprus poecilogyrus (Water snake)).